The primary structure comprises 444 residues: Phosphoglucosamine mutase (444 aa).

The Phosphoserine intermediate role is filled by Ser102. Mg(2+) contacts are provided by Ser102, Asp241, Asp243, and Asp245. Ser102 is subject to Phosphoserine.

Belongs to the phosphohexose mutase family. The cofactor is Mg(2+). Post-translationally, activated by phosphorylation.

The enzyme catalyses alpha-D-glucosamine 1-phosphate = D-glucosamine 6-phosphate. Its function is as follows. Catalyzes the conversion of glucosamine-6-phosphate to glucosamine-1-phosphate. The protein is Phosphoglucosamine mutase of Glaesserella parasuis serovar 5 (strain SH0165) (Haemophilus parasuis).